Reading from the N-terminus, the 604-residue chain is BTB/POZ domain-containing protein SR1IP1 (604 aa).

The region spanning 27–96 (SDVTVHVGEA…CYGINFDMST (70 aa)) is the BTB domain. The region spanning 201–474 (DWWAEDLTVL…VQVLYYEQQR (274 aa)) is the NPH3 domain. At Tyr415 the chain carries Phosphotyrosine. Disordered stretches follow at residues 478–499 (EVTN…VLPP) and 532–604 (FEKE…HSIS). Residues 500–541 (KLSSYTDELSKLKRENQDLKLELLKMKMKLKEFEKESEKKTS) adopt a coiled-coil conformation. The segment covering 541–558 (SSSTISTNPSSPISTAST) has biased composition (low complexity). A compositionally biased stretch (basic residues) spans 591 to 604 (GRTKPPKDRRHSIS).

This sequence belongs to the NPH3 family. Interacts with CAMTA3 and CUL3A.

Its pathway is protein modification; protein ubiquitination. Acts as a substrate-specific adapter of an E3 ubiquitin-protein ligase complex (CUL3-RBX1-BTB) which mediates the ubiquitination and subsequent proteasomal degradation of target proteins. Involved in disease resistance. Acts as a substrate adapter that recruits CAMTA3/SR1 for ubiquitination and degradation during pathogen infection. Acts as a positive regulator of plant defense by removing the defense suppressor CAMTA3/SR1. This chain is BTB/POZ domain-containing protein SR1IP1, found in Arabidopsis thaliana (Mouse-ear cress).